A 404-amino-acid chain; its full sequence is Cysteine desulfurase IscS (404 aa).

Residues 75–76, Asn-155, Gln-183, and 203–205 each bind pyridoxal 5'-phosphate; these read AT and SSH. An N6-(pyridoxal phosphate)lysine modification is found at Lys-206. Pyridoxal 5'-phosphate is bound at residue Thr-243. The Cysteine persulfide intermediate role is filled by Cys-328. Cys-328 is a [2Fe-2S] cluster binding site.

It belongs to the class-V pyridoxal-phosphate-dependent aminotransferase family. NifS/IscS subfamily. In terms of assembly, homodimer. Forms a heterotetramer with IscU, interacts with other sulfur acceptors. Requires pyridoxal 5'-phosphate as cofactor.

The protein resides in the cytoplasm. The enzyme catalyses (sulfur carrier)-H + L-cysteine = (sulfur carrier)-SH + L-alanine. The protein operates within cofactor biosynthesis; iron-sulfur cluster biosynthesis. Its function is as follows. Master enzyme that delivers sulfur to a number of partners involved in Fe-S cluster assembly, tRNA modification or cofactor biosynthesis. Catalyzes the removal of elemental sulfur atoms from cysteine to produce alanine. Functions as a sulfur delivery protein for Fe-S cluster synthesis onto IscU, an Fe-S scaffold assembly protein, as well as other S acceptor proteins. This chain is Cysteine desulfurase IscS, found in Histophilus somni (strain 2336) (Haemophilus somnus).